Consider the following 486-residue polypeptide: tRNA sulfurtransferase (486 aa).

A THUMP domain is found at 63-167 (DAFAERLGCI…HEKLYMVVRR (105 aa)). Residues 185–186 (LI), K267, G289, and Q298 contribute to the ATP site. C346 and C460 are disulfide-bonded. The Rhodanese domain maps to 408–486 (VDTQEVVIDI…GYTNVKVYRP (79 aa)). C460 serves as the catalytic Cysteine persulfide intermediate.

This sequence belongs to the ThiI family.

The protein resides in the cytoplasm. The catalysed reaction is [ThiI sulfur-carrier protein]-S-sulfanyl-L-cysteine + a uridine in tRNA + 2 reduced [2Fe-2S]-[ferredoxin] + ATP + H(+) = [ThiI sulfur-carrier protein]-L-cysteine + a 4-thiouridine in tRNA + 2 oxidized [2Fe-2S]-[ferredoxin] + AMP + diphosphate. The enzyme catalyses [ThiS sulfur-carrier protein]-C-terminal Gly-Gly-AMP + S-sulfanyl-L-cysteinyl-[cysteine desulfurase] + AH2 = [ThiS sulfur-carrier protein]-C-terminal-Gly-aminoethanethioate + L-cysteinyl-[cysteine desulfurase] + A + AMP + 2 H(+). Its pathway is cofactor biosynthesis; thiamine diphosphate biosynthesis. In terms of biological role, catalyzes the ATP-dependent transfer of a sulfur to tRNA to produce 4-thiouridine in position 8 of tRNAs, which functions as a near-UV photosensor. Also catalyzes the transfer of sulfur to the sulfur carrier protein ThiS, forming ThiS-thiocarboxylate. This is a step in the synthesis of thiazole, in the thiamine biosynthesis pathway. The sulfur is donated as persulfide by IscS. The sequence is that of tRNA sulfurtransferase from Shewanella denitrificans (strain OS217 / ATCC BAA-1090 / DSM 15013).